The primary structure comprises 256 residues: Phosphoribosylaminoimidazole-succinocarboxamide synthase (256 aa).

Positions 234–256 (KPQKPAAAKKKAPVSKKTVKRTR) are disordered. Basic residues predominate over residues 240-256 (AAKKKAPVSKKTVKRTR).

This sequence belongs to the SAICAR synthetase family.

It catalyses the reaction 5-amino-1-(5-phospho-D-ribosyl)imidazole-4-carboxylate + L-aspartate + ATP = (2S)-2-[5-amino-1-(5-phospho-beta-D-ribosyl)imidazole-4-carboxamido]succinate + ADP + phosphate + 2 H(+). It functions in the pathway purine metabolism; IMP biosynthesis via de novo pathway; 5-amino-1-(5-phospho-D-ribosyl)imidazole-4-carboxamide from 5-amino-1-(5-phospho-D-ribosyl)imidazole-4-carboxylate: step 1/2. This Methanoregula boonei (strain DSM 21154 / JCM 14090 / 6A8) protein is Phosphoribosylaminoimidazole-succinocarboxamide synthase.